The primary structure comprises 381 residues: MAMSRVASTAARAITSPSSLVFTRELQASPGPKKIVGVFYKANEYAEMNPNFLGCAENALGIREWLESKGHQYIVTPDKEGPDCELEKHIPDLHVLISTPFHPAYVTAERIKKAKNLQLLLTAGIGSDHVDLKAAAAAGLTVAEVTGSNTVSVAEDELMRILILVRNFLPGHHQVINGEWNVAAIAHRAYDLEGKTVGTVGAGRIGRLLLQRLKPFNCNLLYHDRLKMDSELENQIGAKFEEDLDKMLSKCDIVVINTPLTEKTKGMFDKERIAKLKKGVLIVNNARGAIMDTQAVVDACNSGHIAGYSGDVWYPQPAPKDHPWRYMPNQAMTPHISGTTIDAQLRYAAGTKDMLDRYFKGEDFPAENYIVKDGELAPQYR.

A mitochondrion-targeting transit peptide spans 1–25 (MAMSRVASTAARAITSPSSLVFTRE). Substrate-binding residues include I125 and N149. NAD(+)-binding positions include T150, 204–205 (RI), D224, 259–263 (PLTEK), N285, D311, and 335–338 (HISG).

It belongs to the D-isomer specific 2-hydroxyacid dehydrogenase family. FDH subfamily. In terms of assembly, homodimer. As to expression, found at high levels in developing tubers, at intermediate level in stems, veins, stolons, and stamens, and at low level in leaves and roots.

The protein localises to the mitochondrion. It carries out the reaction formate + NAD(+) = CO2 + NADH. Catalyzes the NAD(+)-dependent oxidation of formate to carbon dioxide. Involved in the cell stress response. Involved in formate-dependent oxygen uptake coupled to ATP synthesis. This Solanum tuberosum (Potato) protein is Formate dehydrogenase, mitochondrial.